A 488-amino-acid chain; its full sequence is MHIQFPSKPTLPRACWEGRITAGSPGMPPDEIEIEPVRQSSDKMLYCEAESPPTVEKVKPARENSETDLEIEDDEKFFTTGQKELYLEACKLMGVVPVSYFIRNMEESYVNLNHHGLGPRGTKAIAIALVSNMAVTKLELEDNCIMEEGVLSLVEMLQENYYLQEMNISNNHLGLEGARIISDFFERNSSSIWSLELSGNDFKEDSAALLCQALSTNYQIKKLDLSHNQFSDVGGEHLGQMLAINVGLTSLDLSWNNFHTRGAVALCNGLRGNVTLTKLDLSMNGFGNEVALALGEVLRLNRCLVYLDIGGNDIGNEGASKISKGLESNESLRVLKLFLNPINMDGAILLILAIKRNPKSRMEELDISNVLVSEQFMKTLDGVYAVHPQLDVVFKAVQGLSPKKTIFLLTNPMKLIQSYADQHKITIVDFFKSLNPTGTMKMSVDEFQKVMIEQNKVPLNQYQVREVIKKLDEKTGMVNFSFLNTMKP.

LRR repeat units lie at residues 134–155 (AVTKLELEDNCIMEEGVLSLVE), 162–182 (YLQEMNISNNHLGLEGARIIS), 191–212 (SIWSLELSGNDFKEDSAALLCQ), 219–239 (QIKKLDLSHNQFSDVGGEHLG), 247–268 (GLTSLDLSWNNFHTRGAVALCN), 275–296 (TLTKLDLSMNGFGNEVALALGE), 303–324 (CLVYLDIGGNDIGNEGASKISK), and 331–351 (SLRVLKLFLNPINMDGAILLI).

This Homo sapiens (Human) protein is Leucine-rich repeat-containing protein 74A.